We begin with the raw amino-acid sequence, 198 residues long: Large ribosomal subunit protein bL25 (198 aa).

This sequence belongs to the bacterial ribosomal protein bL25 family. CTC subfamily. As to quaternary structure, part of the 50S ribosomal subunit; part of the 5S rRNA/L5/L18/L25 subcomplex. Contacts the 5S rRNA. Binds to the 5S rRNA independently of L5 and L18.

This is one of the proteins that binds to the 5S RNA in the ribosome where it forms part of the central protuberance. In Nitrosomonas europaea (strain ATCC 19718 / CIP 103999 / KCTC 2705 / NBRC 14298), this protein is Large ribosomal subunit protein bL25.